Here is a 932-residue protein sequence, read N- to C-terminus: Receptor-like protein 9a (932 aa).

The first 28 residues, Met1–Cys28, serve as a signal peptide directing secretion. At Ile29–Thr888 the chain is on the extracellular side. Residues Asn53, Asn80, and Asn90 are each glycosylated (N-linked (GlcNAc...) asparagine). 28 LRR repeats span residues Phe97–Ser122, Leu126–Ser152, Arg154–Asp174, Leu175–Lys200, His202–Gln222, Leu223–Ser246, Leu247–Ser273, Glu275–Asn295, Leu296–Gln320, Lys322–Gln345, Lys346–Glu368, Tyr370–Val393, His394–Val417, Leu418–Glu441, Lys443–Gly466, Ser468–Leu491, Glu492–Ser514, Gly516–Phe535, Gly536–Asn560, Val561–Phe583, His585–Leu605, Glu606–Arg629, Phe631–Leu652, Lys653–Val676, Phe745–Phe769, Gln770–Asn792, Thr794–Leu817, and Tyr819–Ser842. N-linked (GlcNAc...) asparagine glycosylation is present at Asn140. N-linked (GlcNAc...) asparagine glycans are attached at residues Asn261 and Asn295. N-linked (GlcNAc...) asparagine glycosylation is found at Asn352 and Asn380. Asn420, Asn425, and Asn454 each carry an N-linked (GlcNAc...) asparagine glycan. 3 N-linked (GlcNAc...) asparagine glycosylation sites follow: Asn524, Asn551, and Asn560. 2 N-linked (GlcNAc...) asparagine glycosylation sites follow: Asn666 and Asn675. 2 N-linked (GlcNAc...) asparagine glycosylation sites follow: Asn776 and Asn792. Asn824, Asn829, Asn860, and Asn866 each carry an N-linked (GlcNAc...) asparagine glycan. A helical transmembrane segment spans residues Phe889 to Cys909. The Cytoplasmic portion of the chain corresponds to Phe910–Val932.

Belongs to the RLP family.

Its subcellular location is the cell membrane. The sequence is that of Receptor-like protein 9a from Arabidopsis thaliana (Mouse-ear cress).